Here is a 439-residue protein sequence, read N- to C-terminus: Acyl-coenzyme A thioesterase 9, mitochondrial (439 aa).

The N-terminal 21 residues, 1 to 21 (MRRAALRLCALGKGQLTPGRG), are a transit peptide targeting the mitochondrion. HotDog ACOT-type domains lie at 84–209 (KDSY…RDSE) and 289–401 (ENSK…EKEV). Lysine 103 carries the N6-acetyllysine modification.

This sequence belongs to the acyl coenzyme A hydrolase family. As to quaternary structure, interacts with NYAP1, NYAP2 and MYO16.

Its subcellular location is the mitochondrion. It localises to the mitochondrion matrix. It is found in the mitochondrion inner membrane. It catalyses the reaction butanoyl-CoA + H2O = butanoate + CoA + H(+). The enzyme catalyses propanoyl-CoA + H2O = propanoate + CoA + H(+). The catalysed reaction is hexadecanoyl-CoA + H2O = hexadecanoate + CoA + H(+). It carries out the reaction octanoyl-CoA + H2O = octanoate + CoA + H(+). It catalyses the reaction decanoyl-CoA + H2O = decanoate + CoA + H(+). The enzyme catalyses tetradecanoyl-CoA + H2O = tetradecanoate + CoA + H(+). The catalysed reaction is 4,8-dimethylnonanoyl-CoA + H2O = 4,8-dimethylnonanoate + CoA + H(+). It carries out the reaction 3-methylbutanoyl-CoA + H2O = 3-methylbutanoate + CoA + H(+). It catalyses the reaction 2-methylpropanoyl-CoA + H2O = 2-methylpropanoate + CoA + H(+). The protein operates within lipid metabolism; fatty acid metabolism. Strongly inhibited by NADH and CoA. Mitochondrial acyl-CoA thioesterase. Catalyzes the hydrolysis of acyl-CoAs into free fatty acids and coenzyme A (CoA), regulating their respective intracellular levels. Regulates both mitochondrial lipid and amino acid metabolism. The polypeptide is Acyl-coenzyme A thioesterase 9, mitochondrial (Homo sapiens (Human)).